We begin with the raw amino-acid sequence, 394 residues long: Imidazolonepropionase (394 aa).

2 residues coordinate Fe(3+): histidine 61 and histidine 63. Residues histidine 61 and histidine 63 each coordinate Zn(2+). Arginine 70, tyrosine 133, and histidine 164 together coordinate 4-imidazolone-5-propanoate. Residue tyrosine 133 coordinates N-formimidoyl-L-glutamate. Position 225 (histidine 225) interacts with Fe(3+). Position 225 (histidine 225) interacts with Zn(2+). Glutamate 228 serves as a coordination point for 4-imidazolone-5-propanoate. Aspartate 299 provides a ligand contact to Fe(3+). Residue aspartate 299 participates in Zn(2+) binding.

Belongs to the metallo-dependent hydrolases superfamily. HutI family. Zn(2+) serves as cofactor. Fe(3+) is required as a cofactor.

Its subcellular location is the cytoplasm. It carries out the reaction 4-imidazolone-5-propanoate + H2O = N-formimidoyl-L-glutamate. Its pathway is amino-acid degradation; L-histidine degradation into L-glutamate; N-formimidoyl-L-glutamate from L-histidine: step 3/3. In terms of biological role, catalyzes the hydrolytic cleavage of the carbon-nitrogen bond in imidazolone-5-propanoate to yield N-formimidoyl-L-glutamate. It is the third step in the universal histidine degradation pathway. The chain is Imidazolonepropionase from Picrophilus torridus (strain ATCC 700027 / DSM 9790 / JCM 10055 / NBRC 100828 / KAW 2/3).